We begin with the raw amino-acid sequence, 553 residues long: Non-SCF-type F-box protein ROY1 (553 aa).

The F-box domain occupies 3-49 (FQDQDIFIVFSHASLFLNQNDLLSLSLTSKKMHDMIAIPRLYSNIHI).

In terms of assembly, interacts with SKP1 and YPT32; SKP1 is required for the interaction with YPT32.

It localises to the cytoplasm. It is found in the nucleus. Its subcellular location is the cytoplasmic vesicle membrane. In terms of biological role, non-SCF-type F-box protein involved in the endocytic with the vacuolar sorting pathway. Acts as a repressor of YPT52 by inhibiting the formation of active, GTP-bound, YPT52. Involved in the defense mechanism against methylmercury toxicity. This is Non-SCF-type F-box protein ROY1 (ROY1) from Saccharomyces cerevisiae (strain ATCC 204508 / S288c) (Baker's yeast).